Reading from the N-terminus, the 173-residue chain is Mesencephalic astrocyte-derived neurotrophic factor homolog (173 aa).

A signal peptide spans 1 to 22; the sequence is MKTWYMVVVIGFLATLAQTSLA. 4 disulfides stabilise this stretch: Cys-28-Cys-114, Cys-31-Cys-103, Cys-61-Cys-72, and Cys-148-Cys-151.

Belongs to the ARMET family.

It is found in the secreted. In terms of biological role, required during the maturation of the embryonic nervous system for maintenance of neuronal and cuticular connectivity. Essential for maintenance of dopaminergic neurons and dopamine levels. In Drosophila erecta (Fruit fly), this protein is Mesencephalic astrocyte-derived neurotrophic factor homolog.